Here is a 296-residue protein sequence, read N- to C-terminus: Probable endonuclease 4 (296 aa).

9 residues coordinate Zn(2+): histidine 68, histidine 109, glutamate 144, aspartate 178, histidine 181, histidine 213, aspartate 226, histidine 228, and glutamate 258.

It belongs to the AP endonuclease 2 family. Requires Zn(2+) as cofactor.

The enzyme catalyses Endonucleolytic cleavage to 5'-phosphooligonucleotide end-products.. Its function is as follows. Endonuclease IV plays a role in DNA repair. It cleaves phosphodiester bonds at apurinic or apyrimidinic (AP) sites, generating a 3'-hydroxyl group and a 5'-terminal sugar phosphate. The polypeptide is Probable endonuclease 4 (Pediococcus pentosaceus (strain ATCC 25745 / CCUG 21536 / LMG 10740 / 183-1w)).